The primary structure comprises 432 residues: Histidine--tRNA ligase (432 aa).

The protein belongs to the class-II aminoacyl-tRNA synthetase family. In terms of assembly, homodimer.

It is found in the cytoplasm. The catalysed reaction is tRNA(His) + L-histidine + ATP = L-histidyl-tRNA(His) + AMP + diphosphate + H(+). This Symbiobacterium thermophilum (strain DSM 24528 / JCM 14929 / IAM 14863 / T) protein is Histidine--tRNA ligase.